We begin with the raw amino-acid sequence, 378 residues long: Holliday junction branch migration complex subunit RuvB 1 (378 aa).

Residues methionine 1 to asparagine 12 are compositionally biased toward polar residues. Positions methionine 1–arginine 62 are disordered. The interval alanine 13–tyrosine 222 is large ATPase domain (RuvB-L). Residues leucine 61, arginine 62, glycine 103, lysine 106, threonine 107, threonine 108, glutamate 169 to phenylalanine 171, arginine 212, tyrosine 222, and arginine 259 each bind ATP. Threonine 107 contributes to the Mg(2+) binding site. The segment at glutamate 223–glutamine 293 is small ATPAse domain (RuvB-S). The segment at proline 296–serine 378 is head domain (RuvB-H). Residues arginine 351 and arginine 356 each contribute to the DNA site.

The protein belongs to the RuvB family. Homohexamer. Forms an RuvA(8)-RuvB(12)-Holliday junction (HJ) complex. HJ DNA is sandwiched between 2 RuvA tetramers; dsDNA enters through RuvA and exits via RuvB. An RuvB hexamer assembles on each DNA strand where it exits the tetramer. Each RuvB hexamer is contacted by two RuvA subunits (via domain III) on 2 adjacent RuvB subunits; this complex drives branch migration. In the full resolvosome a probable DNA-RuvA(4)-RuvB(12)-RuvC(2) complex forms which resolves the HJ.

It is found in the cytoplasm. The enzyme catalyses ATP + H2O = ADP + phosphate + H(+). The RuvA-RuvB-RuvC complex processes Holliday junction (HJ) DNA during genetic recombination and DNA repair, while the RuvA-RuvB complex plays an important role in the rescue of blocked DNA replication forks via replication fork reversal (RFR). RuvA specifically binds to HJ cruciform DNA, conferring on it an open structure. The RuvB hexamer acts as an ATP-dependent pump, pulling dsDNA into and through the RuvAB complex. RuvB forms 2 homohexamers on either side of HJ DNA bound by 1 or 2 RuvA tetramers; 4 subunits per hexamer contact DNA at a time. Coordinated motions by a converter formed by DNA-disengaged RuvB subunits stimulates ATP hydrolysis and nucleotide exchange. Immobilization of the converter enables RuvB to convert the ATP-contained energy into a lever motion, pulling 2 nucleotides of DNA out of the RuvA tetramer per ATP hydrolyzed, thus driving DNA branch migration. The RuvB motors rotate together with the DNA substrate, which together with the progressing nucleotide cycle form the mechanistic basis for DNA recombination by continuous HJ branch migration. Branch migration allows RuvC to scan DNA until it finds its consensus sequence, where it cleaves and resolves cruciform DNA. This Synechococcus sp. (strain JA-3-3Ab) (Cyanobacteria bacterium Yellowstone A-Prime) protein is Holliday junction branch migration complex subunit RuvB 1.